Reading from the N-terminus, the 161-residue chain is MPSFDVVCEANMVEVKNAVEQANKEISTRFDFKGSDARVEQKEGELTAFADDDFKLGQVKDVLLNKMAKRNVDVRFLDYGKVEKISGDKVKQVITIKKGVTGDLGKKIVRMIKDSKIKVQGSIQGDAVRVSGTKRDDLQSVIAMLRKDVSEAPLDFNNFRD.

The protein belongs to the YajQ family.

Functionally, nucleotide-binding protein. The sequence is that of Nucleotide-binding protein Reut_A2760 from Cupriavidus pinatubonensis (strain JMP 134 / LMG 1197) (Cupriavidus necator (strain JMP 134)).